The following is a 465-amino-acid chain: Glutamate--tRNA ligase (465 aa).

Positions 8–18 match the 'HIGH' region motif; the sequence is PSPTGYLHIGG. The short motif at 236–240 is the 'KMSKS' region element; the sequence is RLSKR. Lys239 lines the ATP pocket.

This sequence belongs to the class-I aminoacyl-tRNA synthetase family. Glutamate--tRNA ligase type 1 subfamily. As to quaternary structure, monomer.

Its subcellular location is the cytoplasm. It catalyses the reaction tRNA(Glu) + L-glutamate + ATP = L-glutamyl-tRNA(Glu) + AMP + diphosphate. Catalyzes the attachment of glutamate to tRNA(Glu) in a two-step reaction: glutamate is first activated by ATP to form Glu-AMP and then transferred to the acceptor end of tRNA(Glu). The protein is Glutamate--tRNA ligase of Nitrosospira multiformis (strain ATCC 25196 / NCIMB 11849 / C 71).